A 306-amino-acid chain; its full sequence is Brix domain-containing protein C4F8.04 (306 aa).

The tract at residues 16–49 (KALHQKNKDKLERRKERAKEEEKDPEKKRLRLSE) is disordered. The segment covering 21–42 (KNKDKLERRKERAKEEEKDPEK) has biased composition (basic and acidic residues). A Brix domain is found at 94–283 (PKLLVTTSKR…LRMVQKGVWD (190 aa)).

The protein is Brix domain-containing protein C4F8.04 of Schizosaccharomyces pombe (strain 972 / ATCC 24843) (Fission yeast).